A 38-amino-acid chain; its full sequence is Glutathione S-transferase 2 (38 aa).

It belongs to the GST superfamily. Phi family.

It catalyses the reaction RX + glutathione = an S-substituted glutathione + a halide anion + H(+). Functionally, conjugation of reduced glutathione to a wide number of exogenous and endogenous hydrophobic electrophiles. In plants, may have a detoxification role against certain herbicides. In Populus euphratica (Euphrates poplar), this protein is Glutathione S-transferase 2.